The chain runs to 147 residues: Large ribosomal subunit protein uL13 (147 aa).

It belongs to the universal ribosomal protein uL13 family. Part of the 50S ribosomal subunit.

In terms of biological role, this protein is one of the early assembly proteins of the 50S ribosomal subunit, although it is not seen to bind rRNA by itself. It is important during the early stages of 50S assembly. This is Large ribosomal subunit protein uL13 from Frankia casuarinae (strain DSM 45818 / CECT 9043 / HFP020203 / CcI3).